A 973-amino-acid chain; its full sequence is Valine--tRNA ligase (973 aa).

A 'HIGH' region motif is present at residues 57 to 67 (PNVTGSLHMGH). Positions 569-573 (KMSKS) match the 'KMSKS' region motif. Residue Lys-572 coordinates ATP. Positions 901–970 (MAGLIDKEAE…AKILEQKIQI (70 aa)) form a coiled coil.

It belongs to the class-I aminoacyl-tRNA synthetase family. ValS type 1 subfamily. As to quaternary structure, monomer.

The protein localises to the cytoplasm. It carries out the reaction tRNA(Val) + L-valine + ATP = L-valyl-tRNA(Val) + AMP + diphosphate. Its function is as follows. Catalyzes the attachment of valine to tRNA(Val). As ValRS can inadvertently accommodate and process structurally similar amino acids such as threonine, to avoid such errors, it has a 'posttransfer' editing activity that hydrolyzes mischarged Thr-tRNA(Val) in a tRNA-dependent manner. The polypeptide is Valine--tRNA ligase (Colwellia psychrerythraea (strain 34H / ATCC BAA-681) (Vibrio psychroerythus)).